The following is a 381-amino-acid chain: Cytochrome b (381 aa).

The next 4 helical transmembrane spans lie at 34–54 (FGSLLGLCLIIQIVTGLFLAM), 78–99 (WLIRNIHANGASLFFVCVYIHI), 114–134 (WNIGVILLFLLMATAFVGYVL), and 179–199 (FFAFHFLLPFLITALMVIHVL). Heme b contacts are provided by H84 and H98. Residues H183 and H197 each contribute to the heme b site. An a ubiquinone-binding site is contributed by H202. The next 4 membrane-spanning stretches (helical) occupy residues 227–247 (YKDALGFLTLLILLGALALFL), 289–309 (LGGVLALLFSILILLLVPLLH), 321–341 (LTQVFFWILVTNMLVLTWIGG), and 348–368 (FILIGQIASITYFSLFLIAMP).

Belongs to the cytochrome b family. In terms of assembly, the cytochrome bc1 complex contains 3 respiratory subunits (MT-CYB, CYC1 and UQCRFS1), 2 core proteins (UQCRC1 and UQCRC2) and probably 6 low-molecular weight proteins. It depends on heme b as a cofactor.

The protein localises to the mitochondrion inner membrane. In terms of biological role, component of the ubiquinol-cytochrome c reductase complex (complex III or cytochrome b-c1 complex) that is part of the mitochondrial respiratory chain. The b-c1 complex mediates electron transfer from ubiquinol to cytochrome c. Contributes to the generation of a proton gradient across the mitochondrial membrane that is then used for ATP synthesis. The protein is Cytochrome b (mt-cyb) of Isurus paucus (Longfin mako shark).